Reading from the N-terminus, the 220-residue chain is Glutathione S-transferase U23 (220 aa).

The 80-residue stretch at 3–82 (EEIILLDYWA…YIDELWPDTN (80 aa)) folds into the GST N-terminal domain. Glutathione-binding positions include 13–14 (SM), 39–40 (NK), 53–54 (KI), and 66–67 (ES). Residues 88-208 (DPYQRAQARF…LPDSDKVLKS (121 aa)) form the GST C-terminal domain.

This sequence belongs to the GST superfamily. Tau family.

The protein resides in the cytoplasm. Its subcellular location is the cytosol. It catalyses the reaction RX + glutathione = an S-substituted glutathione + a halide anion + H(+). Functionally, may be involved in the conjugation of reduced glutathione to a wide number of exogenous and endogenous hydrophobic electrophiles and have a detoxification role against certain herbicides. This is Glutathione S-transferase U23 (GSTU23) from Arabidopsis thaliana (Mouse-ear cress).